The sequence spans 463 residues: Argininosuccinate lyase (463 aa).

It belongs to the lyase 1 family. Argininosuccinate lyase subfamily.

It localises to the cytoplasm. The enzyme catalyses 2-(N(omega)-L-arginino)succinate = fumarate + L-arginine. The protein operates within amino-acid biosynthesis; L-arginine biosynthesis; L-arginine from L-ornithine and carbamoyl phosphate: step 3/3. The chain is Argininosuccinate lyase from Streptococcus pneumoniae serotype 2 (strain D39 / NCTC 7466).